The following is a 169-amino-acid chain: Ribosome maturation factor RimM (169 aa).

In terms of domain architecture, PRC barrel spans 97–169 (EDEVYFKDLI…KIVVDWEYDY (73 aa)).

Belongs to the RimM family. Binds ribosomal protein uS19.

Its subcellular location is the cytoplasm. An accessory protein needed during the final step in the assembly of 30S ribosomal subunit, possibly for assembly of the head region. Essential for efficient processing of 16S rRNA. May be needed both before and after RbfA during the maturation of 16S rRNA. It has affinity for free ribosomal 30S subunits but not for 70S ribosomes. This chain is Ribosome maturation factor RimM, found in Francisella tularensis subsp. tularensis (strain FSC 198).